The following is a 194-amino-acid chain: MEVILLERVSRLGQMGDTVKVKDGFARNFLLPQGKALRANEANKKKFEGQRAQLEARNLERKSEASQVAEKLDGKSFIAVRSAGETGQLYGSVSTRDIAELLTAEGFSVNRNQILLNQPIKTIGLTNVAIALHPEVEVTVTLNIARTADEAERQAKGETLTTAEAIYGDDINDNARPENFFDPNAEFDGGEDNA.

A disordered region spans residues 169 to 194 (DDINDNARPENFFDPNAEFDGGEDNA).

It belongs to the bacterial ribosomal protein bL9 family.

Its function is as follows. Binds to the 23S rRNA. This chain is Large ribosomal subunit protein bL9, found in Mesorhizobium japonicum (strain LMG 29417 / CECT 9101 / MAFF 303099) (Mesorhizobium loti (strain MAFF 303099)).